Reading from the N-terminus, the 468-residue chain is Probable ubiquitin carboxyl-terminal hydrolase R319 (468 aa).

Positions 42–462 (TGIMNLGNTC…NAYILFYIRS (421 aa)) constitute a USP domain. The active-site Nucleophile is the C51. The active-site Proton acceptor is H420.

This sequence belongs to the peptidase C19 family.

The catalysed reaction is Thiol-dependent hydrolysis of ester, thioester, amide, peptide and isopeptide bonds formed by the C-terminal Gly of ubiquitin (a 76-residue protein attached to proteins as an intracellular targeting signal).. This Acanthamoeba polyphaga (Amoeba) protein is Probable ubiquitin carboxyl-terminal hydrolase R319.